Consider the following 1166-residue polypeptide: ATP-dependent helicase/deoxyribonuclease subunit B (1166 aa).

One can recognise a UvrD-like helicase ATP-binding domain in the interval 1–290 (MGMRFILGRS…DTLEGNFQNR (290 aa)). 8–15 (GRSGTNKS) provides a ligand contact to ATP. The UvrD-like helicase C-terminal domain maps to 283–588 (LEGNFQNRPY…QFSHVPPSMD (306 aa)). [4Fe-4S] cluster is bound by residues C802, C1123, C1126, and C1132.

Belongs to the helicase family. AddB/RexB type 1 subfamily. In terms of assembly, heterodimer of AddA and AddB. The cofactor is Mg(2+). [4Fe-4S] cluster is required as a cofactor.

Functionally, the heterodimer acts as both an ATP-dependent DNA helicase and an ATP-dependent, dual-direction single-stranded exonuclease. Recognizes the chi site generating a DNA molecule suitable for the initiation of homologous recombination. The AddB subunit has 5' -&gt; 3' nuclease activity but not helicase activity. The chain is ATP-dependent helicase/deoxyribonuclease subunit B from Oceanobacillus iheyensis (strain DSM 14371 / CIP 107618 / JCM 11309 / KCTC 3954 / HTE831).